Here is a 414-residue protein sequence, read N- to C-terminus: 3-oxoacyl-[acyl-carrier-protein] synthase 2 (414 aa).

One can recognise a Ketosynthase family 3 (KS3) domain in the interval 4–411 (NKRVVITGMG…GHNAVLVFKK (408 aa)). Catalysis depends on for beta-ketoacyl synthase activity residues Cys-165, His-304, and His-341.

The protein belongs to the thiolase-like superfamily. Beta-ketoacyl-ACP synthases family.

It catalyses the reaction a fatty acyl-[ACP] + malonyl-[ACP] + H(+) = a 3-oxoacyl-[ACP] + holo-[ACP] + CO2. It carries out the reaction (9Z)-hexadecenoyl-[ACP] + malonyl-[ACP] + H(+) = 3-oxo-(11Z)-octadecenoyl-[ACP] + holo-[ACP] + CO2. Its pathway is lipid metabolism; fatty acid biosynthesis. Its function is as follows. Involved in the type II fatty acid elongation cycle. Catalyzes the elongation of a wide range of acyl-ACP by the addition of two carbons from malonyl-ACP to an acyl acceptor. Can efficiently catalyze the conversion of palmitoleoyl-ACP (cis-hexadec-9-enoyl-ACP) to cis-vaccenoyl-ACP (cis-octadec-11-enoyl-ACP), an essential step in the thermal regulation of fatty acid composition. The polypeptide is 3-oxoacyl-[acyl-carrier-protein] synthase 2 (fabF) (Staphylococcus aureus (strain MW2)).